A 616-amino-acid chain; its full sequence is Dihydroxy-acid dehydratase (616 aa).

Asp81 lines the Mg(2+) pocket. A [2Fe-2S] cluster-binding site is contributed by Cys122. 2 residues coordinate Mg(2+): Asp123 and Lys124. At Lys124 the chain carries N6-carboxylysine. Residue Cys195 coordinates [2Fe-2S] cluster. Glu491 contacts Mg(2+). Ser517 acts as the Proton acceptor in catalysis.

It belongs to the IlvD/Edd family. Homodimer. Requires [2Fe-2S] cluster as cofactor. Mg(2+) serves as cofactor.

It catalyses the reaction (2R)-2,3-dihydroxy-3-methylbutanoate = 3-methyl-2-oxobutanoate + H2O. The catalysed reaction is (2R,3R)-2,3-dihydroxy-3-methylpentanoate = (S)-3-methyl-2-oxopentanoate + H2O. It participates in amino-acid biosynthesis; L-isoleucine biosynthesis; L-isoleucine from 2-oxobutanoate: step 3/4. The protein operates within amino-acid biosynthesis; L-valine biosynthesis; L-valine from pyruvate: step 3/4. Functionally, functions in the biosynthesis of branched-chain amino acids. Catalyzes the dehydration of (2R,3R)-2,3-dihydroxy-3-methylpentanoate (2,3-dihydroxy-3-methylvalerate) into 2-oxo-3-methylpentanoate (2-oxo-3-methylvalerate) and of (2R)-2,3-dihydroxy-3-methylbutanoate (2,3-dihydroxyisovalerate) into 2-oxo-3-methylbutanoate (2-oxoisovalerate), the penultimate precursor to L-isoleucine and L-valine, respectively. The protein is Dihydroxy-acid dehydratase of Escherichia coli O17:K52:H18 (strain UMN026 / ExPEC).